An 837-amino-acid polypeptide reads, in one-letter code: Valine--tRNA ligase (837 aa).

The 'HIGH' region signature appears at 46–56; it reads PNLTGTLHIGH. The 'KMSKS' region signature appears at 514 to 518; sequence KMSKS. Residue Lys517 participates in ATP binding. Positions 767-837 form a coiled coil; it reads VDDTTQRLKS…QLIAKLTKAH (71 aa).

It belongs to the class-I aminoacyl-tRNA synthetase family. ValS type 1 subfamily. In terms of assembly, monomer.

The protein resides in the cytoplasm. It carries out the reaction tRNA(Val) + L-valine + ATP = L-valyl-tRNA(Val) + AMP + diphosphate. In terms of biological role, catalyzes the attachment of valine to tRNA(Val). As ValRS can inadvertently accommodate and process structurally similar amino acids such as threonine, to avoid such errors, it has a 'posttransfer' editing activity that hydrolyzes mischarged Thr-tRNA(Val) in a tRNA-dependent manner. The sequence is that of Valine--tRNA ligase from Mycoplasma genitalium (strain ATCC 33530 / DSM 19775 / NCTC 10195 / G37) (Mycoplasmoides genitalium).